A 119-amino-acid chain; its full sequence is Promotilin (119 aa).

Residues Met-1–Ala-25 form the signal peptide. The disordered stretch occupies residues Glu-40–Glu-72.

It belongs to the motilin family.

The protein localises to the secreted. Plays an important role in the regulation of interdigestive gastrointestinal motility and indirectly causes rhythmic contraction of duodenal and colonic smooth muscle. In Sus scrofa (Pig), this protein is Promotilin (MLN).